The following is a 304-amino-acid chain: D-alanine--D-alanine ligase (304 aa).

The region spanning 103–299 is the ATP-grasp domain; sequence KLIWQALGLP…FADLCIEILK (197 aa). 129 to 184 lines the ATP pocket; that stretch reads EEKLGLPMFVKPAAEGSSVGVVKVKGKGRLKSVYEELKHLQGEIIAERFIGGGEYS. 3 residues coordinate Mg(2+): aspartate 253, glutamate 266, and asparagine 268.

It belongs to the D-alanine--D-alanine ligase family. Mg(2+) serves as cofactor. Mn(2+) is required as a cofactor.

The protein localises to the cytoplasm. It catalyses the reaction 2 D-alanine + ATP = D-alanyl-D-alanine + ADP + phosphate + H(+). It participates in cell wall biogenesis; peptidoglycan biosynthesis. In terms of biological role, cell wall formation. The sequence is that of D-alanine--D-alanine ligase from Neisseria meningitidis serogroup C / serotype 2a (strain ATCC 700532 / DSM 15464 / FAM18).